A 60-amino-acid polypeptide reads, in one-letter code: Small ribosomal subunit protein eS31 (60 aa).

Zn(2+) contacts are provided by Cys-24, Cys-27, Cys-42, and Cys-45. The C4-type zinc-finger motif lies at 24 to 45; the sequence is CPRCGPGVFMADHGNRYACGRC.

Belongs to the eukaryotic ribosomal protein eS31 family. In terms of assembly, part of the 30S ribosomal subunit. The cofactor is Zn(2+).

This chain is Small ribosomal subunit protein eS31, found in Methanopyrus kandleri (strain AV19 / DSM 6324 / JCM 9639 / NBRC 100938).